Consider the following 87-residue polypeptide: Transcriptional regulator PINT87aa (87 aa).

Interacts with PAF1 complex member PAF1. Interacts with transcription factor FOXM1. Expressed in brain, liver, kidney and stomach with lower levels in breast, intestine, thyroid and pancreas.

Its subcellular location is the nucleus. Its function is as follows. Enhances the binding of the PAF1 complex to target gene promoters and plays a role in negative regulation of transcription. May function as an anchor to keep the PAF1 complex on target gene promoters, sequentially pausing RNA polymerase II-induced mRNA elongation. Inhibits FOXM1-mediated transcription of PHB2. In Homo sapiens (Human), this protein is Transcriptional regulator PINT87aa.